Here is a 327-residue protein sequence, read N- to C-terminus: Putative HTH-type transcriptional regulatory protein MmarC6_0210 (327 aa).

Positions 128-183 constitute an HTH cro/C1-type domain; that stretch reads LRETREKLKISVGELAEISRVSRKTIYKYEQNEANPSAEVAIKIEEYLDVPLIKGI. A DNA-binding region (H-T-H motif) is located at residues 139–158; that stretch reads VGELAEISRVSRKTIYKYEQ.

This is Putative HTH-type transcriptional regulatory protein MmarC6_0210 from Methanococcus maripaludis (strain C6 / ATCC BAA-1332).